A 319-amino-acid polypeptide reads, in one-letter code: Transmembrane and ubiquitin-like domain-containing protein 2 (319 aa).

The helical transmembrane segment at 36 to 56 (VMVVAGVVVLTLALVLAWLST) threads the bilayer. Disordered regions lie at residues 88–130 (VNQG…GDME) and 146–165 (QAGL…DSTC). Residues 95–111 (PTEHPHPSGGSDDKAEE) are compositionally biased toward basic and acidic residues. Residues 173 to 246 (INVRLKFLND…IHCHRSPPGA (74 aa)) enclose the Ubiquitin-like domain. The next 2 membrane-spanning stretches (helical) occupy residues 264–284 (LGVN…GVVW) and 293–313 (FFTA…SFLV).

The protein localises to the membrane. This chain is Transmembrane and ubiquitin-like domain-containing protein 2 (Tmub2), found in Rattus norvegicus (Rat).